The chain runs to 641 residues: Bifunctional protein glk (641 aa).

Residues 1-340 (MSTGAQTKAA…QLSNRTGGAS (340 aa)) are glucokinase. 23–28 (ADVGGT) lines the ATP pocket. An HTH rpiR-type domain is found at 341 to 417 (SAVFERIRQM…LKLATGLTGT (77 aa)). Positions 341-641 (SAVFERIRQM…SHGAAPAAKD (301 aa)) are putative HTH-type transcriptional regulator. A DNA-binding region (H-T-H motif) is located at residues 377 to 396 (IVDIARKADVSQPTVIRFCR). Positions 461 to 600 (AIDILNNARR…AVGVAIRRAA (140 aa)) constitute an SIS domain. Residues 576-596 (SMISRILHLVMIDILAVGVAI) form a helical membrane-spanning segment.

This sequence in the N-terminal section; belongs to the bacterial glucokinase family.

It localises to the membrane. It catalyses the reaction D-glucose + ATP = D-glucose 6-phosphate + ADP + H(+). The polypeptide is Bifunctional protein glk (glk) (Burkholderia pseudomallei (strain 1710b)).